The sequence spans 430 residues: Nucleoporin NUP42 (430 aa).

The tract at residues 1–68 is disordered; that stretch reads MSAFGNPFTS…AFGMPQFGTN (68 aa). Residues 2 to 5 form an SXFG 1 repeat; the sequence is SAFG. Polar residues predominate over residues 15–36; the sequence is NLSNTSGINPFTNNAASTNNMG. SAFGXPXFG repeat units follow at residues 38 to 46 and 58 to 66; these read SAFGRPSFG and SAFGMPQFG. Residues 45 to 68 are compositionally biased toward low complexity; that stretch reads FGTANTMTGGTTTSAFGMPQFGTN. Residues 78–81 form an SXFG 2 repeat; sequence SAFG. SAFGXPXFG repeat units follow at residues 90-98 and 112-120; these read SAFGAPAFG and SAFGAPSFG. The tract at residues 121–230 is interactions with CRM1 and GFD1; it reads STGFGAMAAT…QNTSTSSGTG (110 aa). 2 FG repeats span residues 124–125 and 134–135; these read FG. Serine 137 carries the post-translational modification Phosphoserine. Residues 143 to 151 form an SAFGXPXFG 5 repeat; the sequence is SAFGQPAFG. SXFG repeat units follow at residues 168 to 171 and 182 to 185; these read SAFG and SPFG. Residues 180-294 are disordered; it reads TTSPFGSLQQ…QSPFSGGSGG (115 aa). The span at 186-201 shows a compositional bias: low complexity; that stretch reads SLQQNASQNASSTSSA. Residues 200-208 form an SAFGXPXFG 6 repeat; it reads SAFGKPTFG. Residues 209–230 are compositionally biased toward polar residues; it reads AATNTQSPFGTIQNTSTSSGTG. SXFG repeat units lie at residues 215–218 and 232–235; these read SPFG. 2 stretches are compositionally biased toward polar residues: residues 237-252 and 260-285; these read FGTNSNNKSPFSNLQS and PFGTTTSKANNNNNVGSSAFGTTNNQ. SXFG repeat units lie at residues 259-262 and 277-280; these read SPFG and SAFG. One copy of the FG 3 repeat lies at 296-297; that stretch reads FG. Position 298 is a phosphoserine (serine 298). Residues 312–315 form an SXFG 9 repeat; sequence SSFG. 3 FG repeats span residues 319–322, 339–340, and 361–364; these read FSFG, FG, and FGFG. Residues 319 to 346 are disordered; that stretch reads FSFGITPQNDANKVSQSNPSFGQTMPNT. Positions 323 to 346 are enriched in polar residues; the sequence is ITPQNDANKVSQSNPSFGQTMPNT. Residues 365 to 430 are interaction with GLE1; that stretch reads QQQMNATNVN…DIPPPPALVA (66 aa).

In terms of assembly, component of the nuclear pore complex (NPC). NPC constitutes the exclusive means of nucleocytoplasmic transport. NPCs allow the passive diffusion of ions and small molecules and the active, nuclear transport receptor-mediated bidirectional transport of macromolecules such as proteins, RNAs, ribonucleoparticles (RNPs), and ribosomal subunits across the nuclear envelope. Due to its 8-fold rotational symmetry, all subunits are present with 8 copies or multiples thereof. NUP42 interacts with the NUP82 subcomplex. It interacts directly with GLE1, and through its FG repeats with GFD1, the heterodimeric mRNA transport factor MEX67/MTR2, and the karyopherin CRM1.

Its subcellular location is the nucleus. It is found in the nuclear pore complex. It localises to the nucleus membrane. Functionally, functions as a component of the nuclear pore complex (NPC). NPC components, collectively referred to as nucleoporins (NUPs), can play the role of both NPC structural components and of docking or interaction partners for transiently associated nuclear transport factors. Active directional transport is assured by both, a Phe-Gly (FG) repeat affinity gradient for these transport factors across the NPC and a transport cofactor concentration gradient across the nuclear envelope (GSP1 and GSP2 GTPases associated predominantly with GTP in the nucleus, with GDP in the cytoplasm). NUP42 is specifically important for nuclear protein and mRNA export. The protein is Nucleoporin NUP42 (NUP42) of Saccharomyces cerevisiae (strain ATCC 204508 / S288c) (Baker's yeast).